Here is a 451-residue protein sequence, read N- to C-terminus: tRNA-2-methylthio-N(6)-dimethylallyladenosine synthase (451 aa).

The MTTase N-terminal domain occupies 6 to 122; sequence RHYHITTFGC…LQDLLEQVFN (117 aa). The [4Fe-4S] cluster site is built by Cys-15, Cys-51, Cys-85, Cys-157, Cys-161, and Cys-164. The 238-residue stretch at 143–380 folds into the Radical SAM core domain; it reads RDSKITAWVN…NHLVGVKAAD (238 aa). The TRAM domain occupies 383–447; sequence QRYMGRIEEV…PFSLTGEVKE (65 aa).

The protein belongs to the methylthiotransferase family. MiaB subfamily. As to quaternary structure, monomer. [4Fe-4S] cluster is required as a cofactor.

The protein localises to the cytoplasm. It catalyses the reaction N(6)-dimethylallyladenosine(37) in tRNA + (sulfur carrier)-SH + AH2 + 2 S-adenosyl-L-methionine = 2-methylsulfanyl-N(6)-dimethylallyladenosine(37) in tRNA + (sulfur carrier)-H + 5'-deoxyadenosine + L-methionine + A + S-adenosyl-L-homocysteine + 2 H(+). In terms of biological role, catalyzes the methylthiolation of N6-(dimethylallyl)adenosine (i(6)A), leading to the formation of 2-methylthio-N6-(dimethylallyl)adenosine (ms(2)i(6)A) at position 37 in tRNAs that read codons beginning with uridine. The protein is tRNA-2-methylthio-N(6)-dimethylallyladenosine synthase of Trichodesmium erythraeum (strain IMS101).